The chain runs to 379 residues: UDP-4-amino-4-deoxy-L-arabinose--oxoglutarate aminotransferase (379 aa).

Lysine 182 carries the post-translational modification N6-(pyridoxal phosphate)lysine.

Belongs to the DegT/DnrJ/EryC1 family. ArnB subfamily. As to quaternary structure, homodimer. It depends on pyridoxal 5'-phosphate as a cofactor.

It carries out the reaction UDP-4-amino-4-deoxy-beta-L-arabinose + 2-oxoglutarate = UDP-beta-L-threo-pentopyranos-4-ulose + L-glutamate. The protein operates within nucleotide-sugar biosynthesis; UDP-4-deoxy-4-formamido-beta-L-arabinose biosynthesis; UDP-4-deoxy-4-formamido-beta-L-arabinose from UDP-alpha-D-glucuronate: step 2/3. Its pathway is bacterial outer membrane biogenesis; lipopolysaccharide biosynthesis. Functionally, catalyzes the conversion of UDP-4-keto-arabinose (UDP-Ara4O) to UDP-4-amino-4-deoxy-L-arabinose (UDP-L-Ara4N). The modified arabinose is attached to lipid A and is required for resistance to polymyxin and cationic antimicrobial peptides. The polypeptide is UDP-4-amino-4-deoxy-L-arabinose--oxoglutarate aminotransferase (Klebsiella pneumoniae subsp. pneumoniae (strain ATCC 700721 / MGH 78578)).